Consider the following 146-residue polypeptide: Large ribosomal subunit protein uL13 (146 aa).

Belongs to the universal ribosomal protein uL13 family. As to quaternary structure, part of the 50S ribosomal subunit.

Functionally, this protein is one of the early assembly proteins of the 50S ribosomal subunit, although it is not seen to bind rRNA by itself. It is important during the early stages of 50S assembly. The protein is Large ribosomal subunit protein uL13 of Borreliella burgdorferi (strain ATCC 35210 / DSM 4680 / CIP 102532 / B31) (Borrelia burgdorferi).